Consider the following 498-residue polypeptide: 3-octaprenyl-4-hydroxybenzoate carboxy-lyase (498 aa).

N177 lines the Mn(2+) pocket. Residues I180–R182, R194–L196, and R199–G200 contribute to the prenylated FMN site. E243 provides a ligand contact to Mn(2+). Catalysis depends on D292, which acts as the Proton donor.

Belongs to the UbiD family. As to quaternary structure, homohexamer. Prenylated FMN is required as a cofactor. It depends on Mn(2+) as a cofactor.

It localises to the cell membrane. The catalysed reaction is a 4-hydroxy-3-(all-trans-polyprenyl)benzoate + H(+) = a 2-(all-trans-polyprenyl)phenol + CO2. The protein operates within cofactor biosynthesis; ubiquinone biosynthesis. Functionally, catalyzes the decarboxylation of 3-octaprenyl-4-hydroxy benzoate to 2-octaprenylphenol, an intermediate step in ubiquinone biosynthesis. The protein is 3-octaprenyl-4-hydroxybenzoate carboxy-lyase of Methylococcus capsulatus (strain ATCC 33009 / NCIMB 11132 / Bath).